Here is a 294-residue protein sequence, read N- to C-terminus: Aquaporin NIP1-2 (294 aa).

Methionine 1 bears the N-acetylmethionine mark. A run of 2 helical transmembrane segments spans residues 54–74 (LMAE…AVAV) and 82–102 (VTLP…VYSL). Positions 111–113 (NPA) match the NPA 1 motif. Helical transmembrane passes span 133-153 (VISQ…LFGL), 177-197 (SFVI…GVAT), and 201-221 (AIGE…VIIA). The NPA 2 signature appears at 230 to 232 (NPG). The helical transmembrane segment at 248-268 (WIYIVSPIVGAVSGAWVYNMV) threads the bilayer. Serine 283 bears the Phosphoserine mark.

It belongs to the MIP/aquaporin (TC 1.A.8) family. NIP (TC 1.A.8.12) subfamily. Expressed in developing seeds.

The protein localises to the membrane. In terms of biological role, water channel probably required to promote glycerol permeability and water transport across cell membranes. The polypeptide is Aquaporin NIP1-2 (NIP1-2) (Arabidopsis thaliana (Mouse-ear cress)).